The sequence spans 270 residues: SPbeta prophage-derived DNA ligase-like protein LigB (270 aa).

Lysine 25 acts as the N6-AMP-lysine intermediate in catalysis.

Belongs to the ATP-dependent DNA ligase family.

This Bacillus subtilis (strain 168) protein is SPbeta prophage-derived DNA ligase-like protein LigB (ligB).